Here is a 327-residue protein sequence, read N- to C-terminus: 1-aminocyclopropane-1-carboxylate oxidase 1 (327 aa).

Positions 157–257 (PTFGTKVSNY…RMSIASFYNP (101 aa)) constitute a Fe2OG dioxygenase domain. 3 residues coordinate Fe cation: His-181, Asp-183, and His-238.

Belongs to the iron/ascorbate-dependent oxidoreductase family. The cofactor is Fe cation.

It carries out the reaction 1-aminocyclopropane-1-carboxylate + L-ascorbate + O2 = ethene + L-dehydroascorbate + hydrogen cyanide + CO2 + 2 H2O. The protein operates within alkene biosynthesis; ethylene biosynthesis via S-adenosyl-L-methionine; ethylene from S-adenosyl-L-methionine: step 2/2. This chain is 1-aminocyclopropane-1-carboxylate oxidase 1 (ACO1), found in Doritaenopsis sp. (Moth orchid).